Consider the following 187-residue polypeptide: Elongation factor P (187 aa).

Belongs to the elongation factor P family.

It is found in the cytoplasm. It participates in protein biosynthesis; polypeptide chain elongation. Functionally, involved in peptide bond synthesis. Stimulates efficient translation and peptide-bond synthesis on native or reconstituted 70S ribosomes in vitro. Probably functions indirectly by altering the affinity of the ribosome for aminoacyl-tRNA, thus increasing their reactivity as acceptors for peptidyl transferase. This Sphingopyxis alaskensis (strain DSM 13593 / LMG 18877 / RB2256) (Sphingomonas alaskensis) protein is Elongation factor P.